We begin with the raw amino-acid sequence, 232 residues long: 5'-methylthioadenosine/S-adenosylhomocysteine nucleosidase (232 aa).

Glutamate 12 acts as the Proton acceptor in catalysis. Substrate-binding positions include glycine 78, isoleucine 152, and 173–174 (ME). Residue aspartate 197 is the Proton donor of the active site.

This sequence belongs to the PNP/UDP phosphorylase family. MtnN subfamily. Homodimer.

The enzyme catalyses S-adenosyl-L-homocysteine + H2O = S-(5-deoxy-D-ribos-5-yl)-L-homocysteine + adenine. It catalyses the reaction S-methyl-5'-thioadenosine + H2O = 5-(methylsulfanyl)-D-ribose + adenine. It carries out the reaction 5'-deoxyadenosine + H2O = 5-deoxy-D-ribose + adenine. Its pathway is amino-acid biosynthesis; L-methionine biosynthesis via salvage pathway; S-methyl-5-thio-alpha-D-ribose 1-phosphate from S-methyl-5'-thioadenosine (hydrolase route): step 1/2. Its function is as follows. Catalyzes the irreversible cleavage of the glycosidic bond in both 5'-methylthioadenosine (MTA) and S-adenosylhomocysteine (SAH/AdoHcy) to adenine and the corresponding thioribose, 5'-methylthioribose and S-ribosylhomocysteine, respectively. Also cleaves 5'-deoxyadenosine, a toxic by-product of radical S-adenosylmethionine (SAM) enzymes, into 5-deoxyribose and adenine. Thus, is required for in vivo function of the radical SAM enzymes biotin synthase and lipoic acid synthase, that are inhibited by 5'-deoxyadenosine accumulation. This is 5'-methylthioadenosine/S-adenosylhomocysteine nucleosidase from Klebsiella pneumoniae subsp. pneumoniae (strain ATCC 700721 / MGH 78578).